The following is a 475-amino-acid chain: Ribulose bisphosphate carboxylase large chain (475 aa).

A propeptide spanning residues 1–2 (MS) is cleaved from the precursor. The residue at position 3 (Pro3) is an N-acetylproline. Position 14 is an N6,N6,N6-trimethyllysine (Lys14). Residues Asn123 and Thr173 each contribute to the substrate site. Lys175 (proton acceptor) is an active-site residue. Lys177 contacts substrate. The Mg(2+) site is built by Lys201, Asp203, and Glu204. Lys201 is modified (N6-carboxylysine). His294 acts as the Proton acceptor in catalysis. Residues Arg295, His327, and Ser379 each contribute to the substrate site.

The protein belongs to the RuBisCO large chain family. Type I subfamily. Heterohexadecamer of 8 large chains and 8 small chains; disulfide-linked. The disulfide link is formed within the large subunit homodimers. It depends on Mg(2+) as a cofactor. In terms of processing, the disulfide bond which can form in the large chain dimeric partners within the hexadecamer appears to be associated with oxidative stress and protein turnover.

Its subcellular location is the plastid. It is found in the chloroplast. The catalysed reaction is 2 (2R)-3-phosphoglycerate + 2 H(+) = D-ribulose 1,5-bisphosphate + CO2 + H2O. It catalyses the reaction D-ribulose 1,5-bisphosphate + O2 = 2-phosphoglycolate + (2R)-3-phosphoglycerate + 2 H(+). In terms of biological role, ruBisCO catalyzes two reactions: the carboxylation of D-ribulose 1,5-bisphosphate, the primary event in carbon dioxide fixation, as well as the oxidative fragmentation of the pentose substrate in the photorespiration process. Both reactions occur simultaneously and in competition at the same active site. The sequence is that of Ribulose bisphosphate carboxylase large chain from Clarkia xantiana (Gunsight clarkia).